Consider the following 224-residue polypeptide: Uracil-DNA glycosylase 2 (224 aa).

Residue Asp64 is the Proton acceptor of the active site.

This sequence belongs to the uracil-DNA glycosylase (UDG) superfamily. UNG family.

The protein resides in the cytoplasm. The catalysed reaction is Hydrolyzes single-stranded DNA or mismatched double-stranded DNA and polynucleotides, releasing free uracil.. In terms of biological role, excises uracil residues from the DNA which can arise as a result of misincorporation of dUMP residues by DNA polymerase or due to deamination of cytosine. In Listeria monocytogenes serovar 1/2a (strain ATCC BAA-679 / EGD-e), this protein is Uracil-DNA glycosylase 2.